Consider the following 215-residue polypeptide: 3-isopropylmalate dehydratase small subunit (215 aa).

Belongs to the LeuD family. LeuD type 1 subfamily. In terms of assembly, heterodimer of LeuC and LeuD.

It catalyses the reaction (2R,3S)-3-isopropylmalate = (2S)-2-isopropylmalate. It participates in amino-acid biosynthesis; L-leucine biosynthesis; L-leucine from 3-methyl-2-oxobutanoate: step 2/4. In terms of biological role, catalyzes the isomerization between 2-isopropylmalate and 3-isopropylmalate, via the formation of 2-isopropylmaleate. This chain is 3-isopropylmalate dehydratase small subunit, found in Polynucleobacter asymbioticus (strain DSM 18221 / CIP 109841 / QLW-P1DMWA-1) (Polynucleobacter necessarius subsp. asymbioticus).